An 888-amino-acid polypeptide reads, in one-letter code: Alanine--tRNA ligase (888 aa).

Residues His570, His574, Cys673, and His677 each coordinate Zn(2+).

This sequence belongs to the class-II aminoacyl-tRNA synthetase family. Zn(2+) serves as cofactor.

Its subcellular location is the cytoplasm. It carries out the reaction tRNA(Ala) + L-alanine + ATP = L-alanyl-tRNA(Ala) + AMP + diphosphate. Functionally, catalyzes the attachment of alanine to tRNA(Ala) in a two-step reaction: alanine is first activated by ATP to form Ala-AMP and then transferred to the acceptor end of tRNA(Ala). Also edits incorrectly charged Ser-tRNA(Ala) and Gly-tRNA(Ala) via its editing domain. The chain is Alanine--tRNA ligase from Chlorobium phaeobacteroides (strain DSM 266 / SMG 266 / 2430).